The primary structure comprises 327 residues: Fumigatonoid B endoperoxide isomerase nvfE (327 aa).

The segment at 1–22 is disordered; that stretch reads MGRDQVSHKRSQNSNVSEIPDL. Fe cation-binding residues include His-152, Asp-154, and His-234.

It belongs to the PhyH family. As to quaternary structure, homodimer. Requires Fe cation as cofactor.

The enzyme catalyses fumigatonoid B = fumigatonoid C. It participates in secondary metabolite biosynthesis; terpenoid biosynthesis. Its function is as follows. Fumigatonoid B endoperoxide isomerase; part of the gene cluster that mediates the biosynthesis of novofumigatonin, a heavily oxygenated meroterpenoid containing a unique orthoester moiety. The first step of the pathway is the synthesis of 3,5-dimethylorsellinic acid (DMOA) by the polyketide synthase nvfA via condensation of one acetyl-CoA starter unit with 3 malonyl-CoA units and 2 methylations. DMOA is then converted to farnesyl-DMOA by the farnesyltransferase nvfB. Epoxydation by FAD-dependent monooxygenase nvfK, followed by a protonation-initiated cyclization catalyzed by the terpene cyclase nvfL leads to the production of asnavolin H. The short chain dehydrogenase nvfC then as a 3-OH dehydrogenase of asnovolin H to yield chemesin D. There are two branches to synthesize asnovolin A from chemesin D. In one branch, chemesin D undergoes Baeyer-Villiger oxidation by nvfH, methylation by nvfJ, and enoyl reduction by the nvfM D enoylreductase that reduces the double bond between C-5'and C-6', to form respectively asnovolin I, asnovolin K, and asnovolin A. In the other branch, the methylation precedes the Baeyer-Villiger oxidation and the enoyl reduction to yield asnovolin A via the asnovolin J intermediate. Asnovolin A is further converted to fumigatonoid A by the Fe(II)/2-oxoglutarate-dependent dioxygenase nvfI that catalyzes an endoperoxidation reaction. The alpha/beta hydrolase nvfD then acts as an epimerase that converts fumigatonoid A to its C-5' epimer, which then undergoes spontaneous or nvfD-catalyzed lactonization. The following step utilizes the ketoreductase nvfG to produce fumigatonoid B. The dioxygenase nvfE further converts fumigatonoid B into fumigatonoid C. Finally the Fe(II)/2-oxoglutarate-dependent dioxygenase nvfF catalyzes two rounds of oxidation to transform fumigatonoid C into the end product, novofumigatonin A. The polypeptide is Fumigatonoid B endoperoxide isomerase nvfE (Aspergillus novofumigatus (strain IBT 16806)).